Consider the following 677-residue polypeptide: DNA ligase (677 aa).

Residues 43–47, 92–93, and glutamate 122 each bind NAD(+); these read DHVYD and SM. The N6-AMP-lysine intermediate role is filled by lysine 124. Residues arginine 145, glutamate 179, lysine 295, and lysine 319 each contribute to the NAD(+) site. Cysteine 413, cysteine 416, cysteine 431, and cysteine 436 together coordinate Zn(2+). A BRCT domain is found at 599-677; that stretch reads TSDSYFNGKT…EADLDNYLAQ (79 aa).

This sequence belongs to the NAD-dependent DNA ligase family. LigA subfamily. Mg(2+) serves as cofactor. The cofactor is Mn(2+).

It carries out the reaction NAD(+) + (deoxyribonucleotide)n-3'-hydroxyl + 5'-phospho-(deoxyribonucleotide)m = (deoxyribonucleotide)n+m + AMP + beta-nicotinamide D-nucleotide.. Its function is as follows. DNA ligase that catalyzes the formation of phosphodiester linkages between 5'-phosphoryl and 3'-hydroxyl groups in double-stranded DNA using NAD as a coenzyme and as the energy source for the reaction. It is essential for DNA replication and repair of damaged DNA. The polypeptide is DNA ligase (Latilactobacillus sakei subsp. sakei (strain 23K) (Lactobacillus sakei subsp. sakei)).